The following is a 373-amino-acid chain: DNA replication and repair protein RecF (373 aa).

An ATP-binding site is contributed by 30 to 37; it reads GDNAQGKT.

This sequence belongs to the RecF family.

It is found in the cytoplasm. In terms of biological role, the RecF protein is involved in DNA metabolism; it is required for DNA replication and normal SOS inducibility. RecF binds preferentially to single-stranded, linear DNA. It also seems to bind ATP. This Oenococcus oeni (strain ATCC BAA-331 / PSU-1) protein is DNA replication and repair protein RecF.